The primary structure comprises 413 residues: CinA-like protein (413 aa).

The protein belongs to the CinA family.

This is CinA-like protein from Geobacter metallireducens (strain ATCC 53774 / DSM 7210 / GS-15).